An 82-amino-acid chain; its full sequence is Ranatensin (82 aa).

Residues 1–27 (MTTIPAIGILPIDFLTILLLFSFISHS) form the signal peptide. Positions 28–47 (VCVEFAEDAGELDKSNAFRR) are excised as a propeptide. Position 58 is a methionine amide (M58). Positions 62–82 (SLSDDTEQATMYSSRFVESTS) are excised as a propeptide.

Belongs to the bombesin/neuromedin-B/ranatensin family. Expressed by the skin glands.

The protein resides in the secreted. The polypeptide is Ranatensin (Lithobates pipiens (Northern leopard frog)).